The primary structure comprises 469 residues: Uronate isomerase (469 aa).

This sequence belongs to the metallo-dependent hydrolases superfamily. Uronate isomerase family.

It catalyses the reaction D-glucuronate = D-fructuronate. The enzyme catalyses aldehydo-D-galacturonate = keto-D-tagaturonate. It participates in carbohydrate metabolism; pentose and glucuronate interconversion. This Yersinia pseudotuberculosis serotype O:1b (strain IP 31758) protein is Uronate isomerase.